The sequence spans 214 residues: Large ribosomal subunit protein uL3 (214 aa).

Residues 134-153 (ATHGNSLSHRAPGSIGQNQT) are disordered. N5-methylglutamine is present on Gln-152.

The protein belongs to the universal ribosomal protein uL3 family. Part of the 50S ribosomal subunit. Forms a cluster with proteins L14 and L19. In terms of processing, methylated by PrmB.

In terms of biological role, one of the primary rRNA binding proteins, it binds directly near the 3'-end of the 23S rRNA, where it nucleates assembly of the 50S subunit. The sequence is that of Large ribosomal subunit protein uL3 from Buchnera aphidicola subsp. Baizongia pistaciae (strain Bp).